We begin with the raw amino-acid sequence, 140 residues long: Peptidyl-prolyl cis-trans isomerase FKBP2 (140 aa).

The first 22 residues, 1-22, serve as a signal peptide directing secretion; that stretch reads MRLSWILTILSICLSALAAATG. In terms of domain architecture, PPIase FKBP-type spans 47-135; the sequence is GDVLHMHYTG…VFEVELLKIE (89 aa). The Prevents secretion from ER motif lies at 137 to 140; the sequence is RSEL.

This sequence belongs to the FKBP-type PPIase family. FKBP2 subfamily. Interacts with ARFGEF1/BIG1 and the C-terminal of EPB41L2.

Its subcellular location is the endoplasmic reticulum membrane. The catalysed reaction is [protein]-peptidylproline (omega=180) = [protein]-peptidylproline (omega=0). Its activity is regulated as follows. Inhibited by both FK506 and rapamycin. Functionally, PPIases accelerate the folding of proteins. It catalyzes the cis-trans isomerization of proline imidic peptide bonds in oligopeptides. In Mus musculus (Mouse), this protein is Peptidyl-prolyl cis-trans isomerase FKBP2 (Fkbp2).